The following is a 363-amino-acid chain: Peroxisomal (S)-2-hydroxyacid oxidase GLO4 (363 aa).

Residues 1–357 (MDQIVNVDEF…TRNHVRTENE (357 aa)) enclose the FMN hydroxy acid dehydrogenase domain. FMN contacts are provided by residues 78-80 (PTA), S107, 128-130 (QIY), and T156. A 2-oxocarboxylate is bound at residue Y130. R165 is a binding site for a 2-oxocarboxylate. The FMN site is built by K228 and S250. H252 serves as the catalytic Proton acceptor. A 2-oxocarboxylate is bound at residue R255. FMN contacts are provided by residues 283-287 (DGGVR) and 306-307 (GR). The Microbody targeting signal signature appears at 361-363 (SML).

This sequence belongs to the FMN-dependent alpha-hydroxy acid dehydrogenase family. Homotetramer. FMN is required as a cofactor.

Its subcellular location is the peroxisome. The catalysed reaction is a (2S)-2-hydroxycarboxylate + O2 = a 2-oxocarboxylate + H2O2. It catalyses the reaction 2-hydroxydodecanoate + O2 = 2-oxododecanoate + H2O2. It carries out the reaction 2-hydroxyhexanoate + O2 = 2-oxohexanoate + H2O2. The enzyme catalyses 2-hydroxyoctanoate + O2 = 2-oxooctanoate + H2O2. The catalysed reaction is (S)-lactate + O2 = pyruvate + H2O2. It participates in lipid metabolism; fatty acid metabolism. Oxidase that catalyzes the oxidation of a broad range of 2-hydroxyacids to the corresponding 2-oxoacids, with a reduction of O2 to H2O2. Displays the highest activity with the long-chain fatty acid 2-hydroxydodecanoate and has intermediate activity with 2-hydroxyhexanoate, 2-hydroxyoctanote, and the short-chain hydroxyacid (S)-lactate (L-lactate). With much lower activity, it can also use glycolate, leucic acid, valic acid, and isoleucic acid as substrates in vitro. Cannot use 2-hydroxyhexadecanoate or D-lactate as substrates. May be involved in a general medium- and long-chain fatty acid catabolic pathway such as alpha-oxidation. The protein is Peroxisomal (S)-2-hydroxyacid oxidase GLO4 (GLO4) of Arabidopsis thaliana (Mouse-ear cress).